A 331-amino-acid polypeptide reads, in one-letter code: Pantothenate kinase (331 aa).

109-116 (GSVAVGKS) serves as a coordination point for ATP.

Belongs to the prokaryotic pantothenate kinase family.

It localises to the cytoplasm. The catalysed reaction is (R)-pantothenate + ATP = (R)-4'-phosphopantothenate + ADP + H(+). It functions in the pathway cofactor biosynthesis; coenzyme A biosynthesis; CoA from (R)-pantothenate: step 1/5. The sequence is that of Pantothenate kinase from Rhizobium rhizogenes (strain K84 / ATCC BAA-868) (Agrobacterium radiobacter).